The primary structure comprises 361 residues: Porphobilinogen deaminase (361 aa).

An N-acetylserine modification is found at Ser-2. Residue Ser-69 is modified to Phosphoserine. N6-acetyllysine is present on Lys-74. At Ser-147 the chain carries Phosphoserine. Cys-261 is modified (S-(dipyrrolylmethanemethyl)cysteine).

Belongs to the HMBS family. As to quaternary structure, monomer. The cofactor is dipyrromethane.

Its subcellular location is the cytoplasm. It is found in the cytosol. The enzyme catalyses 4 porphobilinogen + H2O = hydroxymethylbilane + 4 NH4(+). Its pathway is porphyrin-containing compound metabolism; protoporphyrin-IX biosynthesis; coproporphyrinogen-III from 5-aminolevulinate: step 2/4. Functionally, as part of the heme biosynthetic pathway, catalyzes the sequential polymerization of four molecules of porphobilinogen to form hydroxymethylbilane, also known as preuroporphyrinogen. Catalysis begins with the assembly of the dipyrromethane cofactor by the apoenzyme from two molecules of porphobilinogen or from preuroporphyrinogen. The covalently linked cofactor acts as a primer, around which the tetrapyrrole product is assembled. In the last step of catalysis, the product, preuroporphyrinogen, is released, leaving the cofactor bound to the holodeaminase intact. In Rattus norvegicus (Rat), this protein is Porphobilinogen deaminase (Hmbs).